Here is a 270-residue protein sequence, read N- to C-terminus: 3-methyl-2-oxobutanoate hydroxymethyltransferase (270 aa).

Mg(2+) is bound by residues D43 and D82. 3-methyl-2-oxobutanoate-binding positions include 43-44 (DS), D82, and K112. E114 lines the Mg(2+) pocket. Catalysis depends on E179, which acts as the Proton acceptor.

Belongs to the PanB family. In terms of assembly, homodecamer; pentamer of dimers. The cofactor is Mg(2+).

The protein resides in the cytoplasm. The enzyme catalyses 3-methyl-2-oxobutanoate + (6R)-5,10-methylene-5,6,7,8-tetrahydrofolate + H2O = 2-dehydropantoate + (6S)-5,6,7,8-tetrahydrofolate. Its pathway is cofactor biosynthesis; (R)-pantothenate biosynthesis; (R)-pantoate from 3-methyl-2-oxobutanoate: step 1/2. Functionally, catalyzes the reversible reaction in which hydroxymethyl group from 5,10-methylenetetrahydrofolate is transferred onto alpha-ketoisovalerate to form ketopantoate. This chain is 3-methyl-2-oxobutanoate hydroxymethyltransferase, found in Staphylococcus saprophyticus subsp. saprophyticus (strain ATCC 15305 / DSM 20229 / NCIMB 8711 / NCTC 7292 / S-41).